Reading from the N-terminus, the 243-residue chain is Linker for activation of T-cells family member 2 (243 aa).

Residues 1 to 5 (MSSGT) are Extracellular-facing. The helical; Signal-anchor for type III membrane protein transmembrane segment at 6 to 26 (ELLWPGAALLVLLGVAASLCV) threads the bilayer. S-palmitoyl cysteine attachment occurs at residues Cys25 and Cys28. Topologically, residues 27–243 (RCSRPGAKRS…VNGEVAATEA (217 aa)) are cytoplasmic. Ser44 is modified (phosphoserine). Tyr58 is modified (phosphotyrosine). 2 positions are modified to phosphoserine: Ser59 and Ser92. Residues Tyr136, Tyr193, and Tyr233 each carry the phosphotyrosine modification. The tract at residues 174–243 (PTSGLCPSAS…VNGEVAATEA (70 aa)) is disordered.

When phosphorylated, interacts with GRB2. May also interact with SOS1, GAB1 and CBL. Post-translationally, phosphorylated on tyrosines following cross-linking of BCR in B-cells, FCGR1 in myeloid cells, or FCER1 in mast cells; which induces the recruitment of GRB2. May be polyubiquitinated. In terms of tissue distribution, highly expressed in spleen, peripheral blood lymphocytes, and germinal centers of lymph nodes. Also expressed in placenta, lung, pancreas and small intestine. Present in B-cells, NK cells and monocytes. Absent from T-cells (at protein level).

The protein resides in the cell membrane. Its function is as follows. Involved in FCER1 (high affinity immunoglobulin epsilon receptor)-mediated signaling in mast cells. May also be involved in BCR (B-cell antigen receptor)-mediated signaling in B-cells and FCGR1 (high affinity immunoglobulin gamma Fc receptor I)-mediated signaling in myeloid cells. Couples activation of these receptors and their associated kinases with distal intracellular events through the recruitment of GRB2. This is Linker for activation of T-cells family member 2 (LAT2) from Homo sapiens (Human).